We begin with the raw amino-acid sequence, 481 residues long: UDP-glucose 6-dehydrogenase (481 aa).

Residues 16-21, Asp41, Lys46, 94-98, 135-136, and Glu172 contribute to the NAD(+) site; these read GAGYVG, VNTPT, and ST. Substrate-binding positions include 168–172, 227–231, Arg267, and 274–280; these read EFLAE, KLVAN, and QASVGFG. Catalysis depends on Cys283, which acts as the Nucleophile. 283 to 286 lines the NAD(+) pocket; the sequence is CFQK. 345 to 346 is a substrate binding site; sequence FK. NAD(+) is bound at residue Arg353. Arg447 serves as a coordination point for substrate.

The protein belongs to the UDP-glucose/GDP-mannose dehydrogenase family. In terms of tissue distribution, expressed in the vulva and in oocytes.

The catalysed reaction is UDP-alpha-D-glucose + 2 NAD(+) + H2O = UDP-alpha-D-glucuronate + 2 NADH + 3 H(+). It participates in nucleotide-sugar biosynthesis; UDP-alpha-D-glucuronate biosynthesis; UDP-alpha-D-glucuronate from UDP-alpha-D-glucose: step 1/1. Functionally, involved in the biosynthesis of glycosaminoglycans; hyaluronan, chondroitin sulfate, and heparan sulfate. In Caenorhabditis elegans, this protein is UDP-glucose 6-dehydrogenase (sqv-4).